Reading from the N-terminus, the 210-residue chain is uncharacterized protein (210 aa).

The next 6 membrane-spanning stretches (helical) occupy residues 9 to 29, 35 to 55, 64 to 84, 91 to 111, 149 to 169, and 190 to 210; these read WVVTGLFVLTAAECGLAIIAK, LIVNHGLHFAMAVAMAVMAWP, GPAVFFLLAAVWFGATAVVAV, GLYGYHGLMMLATAWMYAAMN, IWFSAVNWIGTVGFAVAAVFW, and IGQAMMAAGMAMLFFAMLFPV.

It localises to the cell membrane. This is an uncharacterized protein from Mycobacterium bovis (strain ATCC BAA-935 / AF2122/97).